Reading from the N-terminus, the 510-residue chain is Pentatricopeptide repeat-containing protein At1g71060, mitochondrial (510 aa).

Residues 1-14 constitute a mitochondrion transit peptide; the sequence is MVFSRFFRVTGVNL. PPR repeat units lie at residues 127–157, 161–195, 196–230, 231–265, 266–300, 301–335, 336–370, 371–401, 403–437, and 438–472; these read TTSNYNALIESLGKIKQFKLIWSLVDDMKAK, SKETFALISRRYARARKVKEAIGAFHKMEEFGFKM, ESSDFNRMLDTLSKSRNVGDAQKVFDKMKKKRFEP, DIKSYTILLEGWGQELNLLRVDEVNREMKDEGFEP, DVVAYGIIINAHCKAKKYEEAIRFFNEMEQRNCKP, SPHIFCSLINGLGSEKKLNDALEFFERSKSSGFPL, EAPTYNALVGAYCWSQRMEDAYKTVDEMRLKGVGP, NARTYDIILHHLIRMQRSKEAYEVYQTMSCE, TVSTYEIMVRMFCNKERLDMAIKIWDEMKGKGVLP, and GMHMFSSLITALCHENKLDEACEYFNEMLDVGIRP.

The protein belongs to the PPR family. P subfamily.

It is found in the mitochondrion. This Arabidopsis thaliana (Mouse-ear cress) protein is Pentatricopeptide repeat-containing protein At1g71060, mitochondrial.